Reading from the N-terminus, the 508-residue chain is Photosystem II CP47 reaction center protein (508 aa).

A run of 6 helical transmembrane segments spans residues serine 21–serine 36, isoleucine 101–tryptophan 115, glycine 140–phenylalanine 156, isoleucine 203–serine 218, valine 237–valine 252, and threonine 457–arginine 472.

The protein belongs to the PsbB/PsbC family. PsbB subfamily. In terms of assembly, PSII is composed of 1 copy each of membrane proteins PsbA, PsbB, PsbC, PsbD, PsbE, PsbF, PsbH, PsbI, PsbJ, PsbK, PsbL, PsbM, PsbT, PsbX, PsbY, PsbZ, Psb30/Ycf12, at least 3 peripheral proteins of the oxygen-evolving complex and a large number of cofactors. It forms dimeric complexes. Binds multiple chlorophylls. PSII binds additional chlorophylls, carotenoids and specific lipids. serves as cofactor.

It is found in the plastid. It localises to the chloroplast thylakoid membrane. Functionally, one of the components of the core complex of photosystem II (PSII). It binds chlorophyll and helps catalyze the primary light-induced photochemical processes of PSII. PSII is a light-driven water:plastoquinone oxidoreductase, using light energy to abstract electrons from H(2)O, generating O(2) and a proton gradient subsequently used for ATP formation. This is Photosystem II CP47 reaction center protein from Oryza sativa subsp. indica (Rice).